The following is a 415-amino-acid chain: Small ribosomal subunit protein uS5m (415 aa).

Residues methionine 1–valine 31 form a disordered region. The S5 DRBM domain occupies phenylalanine 131–valine 197. The segment at glycine 396–aspartate 415 is disordered.

The protein belongs to the universal ribosomal protein uS5 family. As to quaternary structure, component of the mitochondrial ribosome small subunit (28S) which comprises a 12S rRNA and about 30 distinct proteins.

The protein localises to the mitochondrion. This Caenorhabditis briggsae protein is Small ribosomal subunit protein uS5m (mrps-5).